A 163-amino-acid polypeptide reads, in one-letter code: Outer membrane protein assembly factor BamE (163 aa).

The first 22 residues, 1–22 (MINKKQSLTLLSAIALSVSLSA), serve as a signal peptide directing secretion. A lipid anchor (N-palmitoyl cysteine) is attached at Cys23. The S-diacylglycerol cysteine moiety is linked to residue Cys23. Residues 122-163 (EQSKLPMVNTTESAPQVPAQRPDEKPLVKENQTEAQVQKPIK) form a disordered region. The segment covering 142 to 153 (RPDEKPLVKENQ) has biased composition (basic and acidic residues).

It belongs to the BamE family. Part of the Bam complex.

It is found in the cell outer membrane. Its function is as follows. Part of the outer membrane protein assembly complex, which is involved in assembly and insertion of beta-barrel proteins into the outer membrane. This chain is Outer membrane protein assembly factor BamE, found in Shewanella oneidensis (strain ATCC 700550 / JCM 31522 / CIP 106686 / LMG 19005 / NCIMB 14063 / MR-1).